The following is a 539-amino-acid chain: MSKRVGIIGAGVSGLAAIWCCLEEGLEPTCFERSDDVGGLWKFSDHTEEGRASIYQSVFTNSSKEMMCFPDFPYPDDYPNYIHHSKLQEYIKTYAQKKDLLRYIQFETLVSGIKKCPSFLVTGQWVVVTEKDGKQESTIFDAVMICSGHHVYPNLPTDSFPGLDQFRGNYLHSRDYKNPEAFKGKRVLVIGLGNSGSDIAVELSRLATQVIISTRSASWVMSRVWDDGYPWDMMYVTRFASFLRNVLPSFISDWLYVQKMNTWFKHENYGLMPLNGSLRKEPVFNDELPSRILCGTLSIKPSVKEFTETSAVFEDGTMFEAIDSVIFATGYDYSYPFLDETIMKSRNNEVTLFKGIFPPLMEKPTLAVIGLVQSLGAAIPTADLQAWWAAKVFANSCTLPTTNEMMDDTDEKMGKKLKCMFSSFFMFGQSQTLQTDYITYVDELGSFIGAKPNIPWLFLTDPRLALEVYFGPCSPYQFRLMGPGKWDGARNAILTQWNRTVKPTRTRVVSEVQRPHPFYNLLKMLSFPLLLLAVTLTFY.

FAD contacts are provided by residues 9–13 (GAGVS), Glu-32, 40–41 (LW), and 61–62 (NS). 195–198 (SGSD) provides a ligand contact to NADP(+). The chain crosses the membrane as a helical span at residues 518-538 (FYNLLKMLSFPLLLLAVTLTF).

This sequence belongs to the FMO family. The cofactor is FAD.

Its subcellular location is the microsome membrane. The protein resides in the endoplasmic reticulum membrane. It catalyses the reaction N,N-dimethylaniline + NADPH + O2 + H(+) = N,N-dimethylaniline N-oxide + NADP(+) + H2O. It is probable that this protein is only produced in very small quantity or not at all as the gene coding for it seems to be unable to produce full-length transcripts. This chain is Putative dimethylaniline monooxygenase [N-oxide-forming] 6 (FMO6P), found in Homo sapiens (Human).